The primary structure comprises 109 residues: MAFASVLKDAEVTAALDGCKAAGSFDHKKFFKACGLSGKSTDEVKKAFAIIDQDKSGFIEEEELKLFLQNFKAGARALSDAETKAFLKAGDSDGDGKIGIDEFAAMIKG.

Ala2 carries the N-acetylalanine modification. The segment at 22–41 is igE-binding; that stretch reads AGSFDHKKFFKACGLSGKST. EF-hand domains lie at 39–74 and 78–109; these read KSTDEVKKAFAIIDQDKSGFIEEEELKLFLQNFKAG and LSDAETKAFLKAGDSDGDGKIGIDEFAAMIKG. Positions 52, 54, 56, 58, 60, 63, 91, 93, 95, 97, and 102 each coordinate Ca(2+).

The protein belongs to the parvalbumin family. The N-terminus is blocked. As to expression, expressed in both white and dark muscles (at protein level). About eight and a half times lower expression in the dark muscle than in the white muscle (at protein level).

Functionally, in muscle, parvalbumin is thought to be involved in relaxation after contraction. It binds two calcium ions. This chain is Parvalbumin beta, found in Scomber japonicus (Chub mackerel).